Reading from the N-terminus, the 215-residue chain is Phosphoserine phosphatase (215 aa).

The Nucleophile role is filled by aspartate 11. Positions 11 and 13 each coordinate Mg(2+). Aspartate 13 acts as the Proton donor in catalysis. Substrate-binding positions include glutamate 20, arginine 56, 99–100 (SG), and lysine 144. Residue aspartate 167 participates in Mg(2+) binding. Asparagine 170 contacts substrate.

Belongs to the HAD-like hydrolase superfamily. SerB family. It depends on Mg(2+) as a cofactor.

It catalyses the reaction O-phospho-L-serine + H2O = L-serine + phosphate. The enzyme catalyses O-phospho-D-serine + H2O = D-serine + phosphate. The protein operates within amino-acid biosynthesis; L-serine biosynthesis; L-serine from 3-phospho-D-glycerate: step 3/3. The sequence is that of Phosphoserine phosphatase from Streptococcus thermophilus (strain ATCC BAA-250 / LMG 18311).